Reading from the N-terminus, the 402-residue chain is Flavohemoprotein (402 aa).

The Globin domain occupies 1 to 136; it reads MLSEKTIEIV…IADAFISIEA (136 aa). Histidine 85 is a heme b binding site. Active-site charge relay system residues include tyrosine 95 and glutamate 135. Residues 147 to 402 form a reductase region; sequence GGWKDFRNFV…EFFGPAASLQ (256 aa). The region spanning 150 to 260 is the FAD-binding FR-type domain; the sequence is KDFRNFVVVK…SAPAGDFVLN (111 aa). Residues tyrosine 188 and 204 to 207 contribute to the FAD site; that span reads RQYS. An NADP(+)-binding site is contributed by 273–278; sequence GVGITP. 394 to 397 contributes to the FAD binding site; it reads FFGP.

The protein belongs to the globin family. Two-domain flavohemoproteins subfamily. This sequence in the C-terminal section; belongs to the flavoprotein pyridine nucleotide cytochrome reductase family. The cofactor is heme b. It depends on FAD as a cofactor.

It catalyses the reaction 2 nitric oxide + NADPH + 2 O2 = 2 nitrate + NADP(+) + H(+). It carries out the reaction 2 nitric oxide + NADH + 2 O2 = 2 nitrate + NAD(+) + H(+). Is involved in NO detoxification in an aerobic process, termed nitric oxide dioxygenase (NOD) reaction that utilizes O(2) and NAD(P)H to convert NO to nitrate, which protects the bacterium from various noxious nitrogen compounds. Therefore, plays a central role in the inducible response to nitrosative stress. The polypeptide is Flavohemoprotein (Bacillus thuringiensis subsp. konkukian (strain 97-27)).